Here is a 3508-residue protein sequence, read N- to C-terminus: WD repeat and FYVE domain-containing protein 3 (3508 aa).

2 positions are modified to phosphoserine: Ser-1942 and Ser-2277. 2 disordered regions span residues 2279 to 2303 (FGLSKLTGSRRNRKESGLHKHSPSP) and 2441 to 2504 (SSEG…EKTD). Residues 2284–2963 (LTGSRRNRKE…PHPPKRVRSR (680 aa)) form a sufficient for translocalization to p62 bodies/ALIS region. Positions 2450–2459 (EPEHGEDTIA) are enriched in basic and acidic residues. At Ser-2474 the chain carries Phosphoserine. The BEACH-type PH domain occupies 2513-2638 (EEGEKIQHMY…IRNKVYQRFL (126 aa)). Positions 2568–3508 (MHEPIIPRGA…RGAEDGPRNC (941 aa)) are interaction with SQSTM1. Positions 2665–2958 (GLLSTLVGEK…QLFKKPHPPK (294 aa)) constitute a BEACH domain. Positions 2963 to 3508 (RLNGDNIGIS…RGAEDGPRNC (546 aa)) are interaction with ATG5. WD repeat units follow at residues 3059–3097 (SEWGQILCAVCPNPKLVITGGTSTVVCVWEMGTSKEKAK), 3107–3146 (GHTDTVTCATASLAYHIIVSGSRDRTCIIWDLNKLSFLTQ), 3149–3188 (GHRAPVSALCINELTGDIVSCAGTYIHVWSINGNPIVSVN), and 3192–3236 (GRSQ…VPET). The segment at 3254 to 3317 (AQIGQQAQDD…SGSDDSRRWS (64 aa)) is disordered. Positions 3261–3272 (QDDDSSDSETEE) are enriched in acidic residues. Ser-3317 and Ser-3321 each carry phosphoserine. The short motif at 3326–3331 (DGFIFV) is the LIR element. One copy of the WD 5 repeat lies at 3390 to 3429 (THPAEVTALGVSKDHSRILVGDSRGRVFSWSVSDQPGRSA). Residues 3436 to 3496 (DEGGDSCSGC…VCQNCYYSLQ (61 aa)) form an FYVE-type zinc finger. Cys-3442, Cys-3445, Cys-3458, Cys-3461, Cys-3466, Cys-3469, Cys-3488, and Cys-3491 together coordinate Zn(2+).

In terms of assembly, directly interacts with ATG5 and associates with the ATG12-ATG5-ATG16L complex. Interacts with p62/SQSTM1. Directly interacts with GABARAP, GABARAPL1 and GABARAPL2; the interaction with GABARAP is required for WDFY3 recruitment to MAP1LC3B-positive p62/SQSTM1 bodies. Weakly interacts with MAP1LC3C; this interaction is direct. Does not interact with MAP1LC3A, nor MAP1LC3B. Interacts with TRAF6. As to expression, widely expressed, with high levels in the brain (at protein level). In the brain, expressed by both neuronal and non-neuronal cells. Expressed in bones, in the periosteum, cartilage, growth plate, trabeculae of the primary spongiosa, and scattered hematopoietic cells within the medullary cavity. Tends to be expressed at lower levels in the hypertrophic zone compared to trabeculae. Expressed in osteoblasts, osteoclasts and bone-marrow derived macrophages.

The protein localises to the nucleus. The protein resides in the cytoplasm. It is found in the cytosol. It localises to the PML body. Its subcellular location is the membrane. The protein localises to the perikaryon. The protein resides in the cell projection. It is found in the axon. Functionally, required for selective macroautophagy (aggrephagy). Acts as an adapter protein by linking specific proteins destined for degradation to the core autophagic machinery members, such as the ATG5-ATG12-ATG16L E3-like ligase, SQSTM1 and LC3. Involved in the formation and autophagic degradation of cytoplasmic ubiquitin-containing inclusions (p62 bodies, ALIS/aggresome-like induced structures). Important for normal brain development. Essential for the formation of axonal tracts throughout the brain and spinal cord, including the formation of the major forebrain commissures. Involved in the ability of neural cells to respond to guidance cues. Required for cortical neurons to respond to the trophic effects of netrin-1/NTN1. Regulates Wnt signaling through the removal of DVL3 aggregates, likely in an autophagy-dependent manner. This process may be important for the determination of brain size during embryonic development. May regulate osteoclastogenesis by acting on the TNFSF11/RANKL - TRAF6 pathway. After cytokinetic abscission, involved in midbody remnant degradation. In vitro strongly binds to phosphatidylinositol 3-phosphate (PtdIns3P). This chain is WD repeat and FYVE domain-containing protein 3 (Wdfy3), found in Mus musculus (Mouse).